Consider the following 351-residue polypeptide: Pleckstrin (351 aa).

The PH 1 domain maps to 4–101; it reads KRIREGYLVK…WVRDTKKAIK (98 aa). K64 carries the N6-acetyllysine modification. Phosphoserine is present on residues S113 and S117. One can recognise a DEP domain in the interval 136–221; it reads IEKGIKELNL…NPDAFYYFPD (86 aa). The region spanning 244–348 is the PH 2 domain; it reads VIIKQGCLLK…WIKAIQVASR (105 aa).

Functionally, major protein kinase C substrate of platelets. The protein is Pleckstrin (PLEK) of Canis lupus familiaris (Dog).